The sequence spans 392 residues: Dual-specificity RNA methyltransferase RlmN (392 aa).

Glu116 serves as the catalytic Proton acceptor. The 243-residue stretch at 122–364 (EEGRGTLCVS…SPIRTPRGED (243 aa)) folds into the Radical SAM core domain. Cys129 and Cys369 are oxidised to a cystine. [4Fe-4S] cluster-binding residues include Cys136, Cys140, and Cys143. S-adenosyl-L-methionine is bound by residues 195–196 (GE), Ser227, 249–251 (SFH), and Asn326. The S-methylcysteine intermediate role is filled by Cys369.

Belongs to the radical SAM superfamily. RlmN family. [4Fe-4S] cluster is required as a cofactor.

The protein localises to the cytoplasm. It catalyses the reaction adenosine(2503) in 23S rRNA + 2 reduced [2Fe-2S]-[ferredoxin] + 2 S-adenosyl-L-methionine = 2-methyladenosine(2503) in 23S rRNA + 5'-deoxyadenosine + L-methionine + 2 oxidized [2Fe-2S]-[ferredoxin] + S-adenosyl-L-homocysteine. The catalysed reaction is adenosine(37) in tRNA + 2 reduced [2Fe-2S]-[ferredoxin] + 2 S-adenosyl-L-methionine = 2-methyladenosine(37) in tRNA + 5'-deoxyadenosine + L-methionine + 2 oxidized [2Fe-2S]-[ferredoxin] + S-adenosyl-L-homocysteine. Functionally, specifically methylates position 2 of adenine 2503 in 23S rRNA and position 2 of adenine 37 in tRNAs. m2A2503 modification seems to play a crucial role in the proofreading step occurring at the peptidyl transferase center and thus would serve to optimize ribosomal fidelity. The chain is Dual-specificity RNA methyltransferase RlmN from Cereibacter sphaeroides (strain ATCC 17025 / ATH 2.4.3) (Rhodobacter sphaeroides).